Consider the following 580-residue polypeptide: WD repeat-containing protein 46 (580 aa).

Residues 34 to 108 (SWKEYKKMKQ…QQEKMKVTKD (75 aa)) form a disordered region. 2 stretches are compositionally biased toward basic and acidic residues: residues 64 to 85 (TEGRAKKPKVLTKEQLERHDTG) and 98 to 108 (LQQEKMKVTKD). WD repeat units lie at residues 193 to 234 (AALD…YTYV), 235 to 272 (YDNLGTELHCLKTMYDTARLEFLPHHFLLVGSSRNSFL), 274 to 312 (YVDVSVGKQVASFATKSGTLDVMCQNPANAIIHTGHTNG), 315 to 354 (SLWSPNSKEPLVKILTHLSAVKGIAVDDQGNYMATTGLDR), 357 to 396 (RIWDVRMFRQLHAYSLPFGVSNVAISQKMNVACAVGNHVQ), and 399 to 436 (RGMHNGTCKEPYLVHNCGGVVTDLRFVPWEDVLGIGHA).

In terms of assembly, part of the small subunit (SSU) processome.

It localises to the nucleus. The protein resides in the nucleolus. Scaffold component of the nucleolar structure. Part of the small subunit (SSU) processome, first precursor of the small eukaryotic ribosomal subunit. Required for 18S rRNA processing. Plays a role in negative regulation of detoxification genes by inhibiting protein levels of transcription factor skn-1, leading to down-regulation of skn-1 target genes. This Caenorhabditis elegans protein is WD repeat-containing protein 46.